An 86-amino-acid polypeptide reads, in one-letter code: Protein Tat (86 aa).

Residues 1 to 24 (MEPVDPRLEPWKHPGSQPKTACTN) form an interaction with human CREBBP region. Residues 1-48 (MEPVDPRLEPWKHPGSQPKTACTNCYCKKCCFHCQVCFITKALGISYG) form a transactivation region. Positions 22, 25, and 27 each coordinate Zn(2+). The tract at residues 22–37 (CTNCYCKKCCFHCQVC) is cysteine-rich. An N6-acetyllysine; by host PCAF modification is found at Lys-28. 4 residues coordinate Zn(2+): Cys-30, His-33, Cys-34, and Cys-37. Positions 38–48 (FITKALGISYG) are core. A compositionally biased stretch (basic residues) spans 48 to 58 (GRKKRRQRRRA). A disordered region spans residues 48 to 86 (GRKKRRQRRRAPQGSQTHQVSLSKQPTSQSRGDPTGPKE). Residues 49-57 (RKKRRQRRR) carry the Nuclear localization signal, RNA-binding (TAR), and protein transduction motif. The tract at residues 49 to 86 (RKKRRQRRRAPQGSQTHQVSLSKQPTSQSRGDPTGPKE) is interaction with the host capping enzyme RNGTT. N6-acetyllysine; by host EP300 and GCN5L2 is present on residues Lys-50 and Lys-51. Residues Arg-52 and Arg-53 each carry the asymmetric dimethylarginine; by host PRMT6 modification. The segment covering 60 to 79 (QGSQTHQVSLSKQPTSQSRG) has biased composition (polar residues). A Glycyl lysine isopeptide (Lys-Gly) (interchain with G-Cter in ubiquitin) cross-link involves residue Lys-71. A Cell attachment site motif is present at residues 78-80 (RGD).

It belongs to the lentiviruses Tat family. Interacts with host CCNT1. Associates with the P-TEFb complex composed at least of Tat, P-TEFb (CDK9 and CCNT1), TAR RNA, RNA Pol II. Recruits the HATs CREBBP, TAF1/TFIID, EP300, PCAF and GCN5L2. Interacts with host KAT5/Tip60; this interaction targets the latter to degradation. Interacts with the host deacetylase SIRT1. Interacts with host capping enzyme RNGTT; this interaction stimulates RNGTT. Binds to host KDR, and to the host integrins ITGAV/ITGB3 and ITGA5/ITGB1. Interacts with host KPNB1/importin beta-1 without previous binding to KPNA1/importin alpha-1. Interacts with EIF2AK2. Interacts with host nucleosome assembly protein NAP1L1; this interaction may be required for the transport of Tat within the nucleus, since the two proteins interact at the nuclear rim. Interacts with host C1QBP/SF2P32; this interaction involves lysine-acetylated Tat. Interacts with the host chemokine receptors CCR2, CCR3 and CXCR4. Interacts with host DPP4/CD26; this interaction may trigger an anti-proliferative effect. Interacts with host LDLR. Interacts with the host extracellular matrix metalloproteinase MMP1. Interacts with host PRMT6; this interaction mediates Tat's methylation. Interacts with, and is ubiquitinated by MDM2/Hdm2. Interacts with host PSMC3 and HTATIP2. Interacts with STAB1; this interaction may overcome SATB1-mediated repression of IL2 and IL2RA (interleukin) in T cells by binding to the same domain than HDAC1. Interacts (when acetylated) with human CDK13, thereby increasing HIV-1 mRNA splicing and promoting the production of the doubly spliced HIV-1 protein Nef. Interacts with host TBP; this interaction modulates the activity of transcriptional pre-initiation complex. Interacts with host RELA. Interacts with host PLSCR1; this interaction negatively regulates Tat transactivation activity by altering its subcellular distribution. Post-translationally, asymmetrical arginine methylation by host PRMT6 seems to diminish the transactivation capacity of Tat and affects the interaction with host CCNT1. In terms of processing, acetylation by EP300, CREBBP, GCN5L2/GCN5 and PCAF regulates the transactivation activity of Tat. EP300-mediated acetylation of Lys-50 promotes dissociation of Tat from the TAR RNA through the competitive binding to PCAF's bromodomain. In addition, the non-acetylated Tat's N-terminus can also interact with PCAF. PCAF-mediated acetylation of Lys-28 enhances Tat's binding to CCNT1. Lys-50 is deacetylated by SIRT1. Polyubiquitination by host MDM2 does not target Tat to degradation, but activates its transactivation function and fosters interaction with CCNT1 and TAR RNA. Post-translationally, phosphorylated by EIF2AK2 on serine and threonine residues adjacent to the basic region important for TAR RNA binding and function. Phosphorylation of Tat by EIF2AK2 is dependent on the prior activation of EIF2AK2 by dsRNA.

It localises to the host nucleus. The protein localises to the host nucleolus. Its subcellular location is the host cytoplasm. It is found in the secreted. Functionally, transcriptional activator that increases RNA Pol II processivity, thereby increasing the level of full-length viral transcripts. Recognizes a hairpin structure at the 5'-LTR of the nascent viral mRNAs referred to as the transactivation responsive RNA element (TAR) and recruits the cyclin T1-CDK9 complex (P-TEFb complex) that will in turn hyperphosphorylate the RNA polymerase II to allow efficient elongation. The CDK9 component of P-TEFb and other Tat-activated kinases hyperphosphorylate the C-terminus of RNA Pol II that becomes stabilized and much more processive. Other factors such as HTATSF1/Tat-SF1, SUPT5H/SPT5, and HTATIP2 are also important for Tat's function. Besides its effect on RNA Pol II processivity, Tat induces chromatin remodeling of proviral genes by recruiting the histone acetyltransferases (HATs) CREBBP, EP300 and PCAF to the chromatin. This also contributes to the increase in proviral transcription rate, especially when the provirus integrates in transcriptionally silent region of the host genome. To ensure maximal activation of the LTR, Tat mediates nuclear translocation of NF-kappa-B by interacting with host RELA. Through its interaction with host TBP, Tat may also modulate transcription initiation. Tat can reactivate a latently infected cell by penetrating in it and transactivating its LTR promoter. In the cytoplasm, Tat is thought to act as a translational activator of HIV-1 mRNAs. Its function is as follows. Extracellular circulating Tat can be endocytosed by surrounding uninfected cells via the binding to several surface receptors such as CD26, CXCR4, heparan sulfate proteoglycans (HSPG) or LDLR. Neurons are rarely infected, but they internalize Tat via their LDLR. Through its interaction with nuclear HATs, Tat is potentially able to control the acetylation-dependent cellular gene expression. Modulates the expression of many cellular genes involved in cell survival, proliferation or in coding for cytokines or cytokine receptors. Tat plays a role in T-cell and neurons apoptosis. Tat induced neurotoxicity and apoptosis probably contribute to neuroAIDS. Circulating Tat also acts as a chemokine-like and/or growth factor-like molecule that binds to specific receptors on the surface of the cells, affecting many cellular pathways. In the vascular system, Tat binds to ITGAV/ITGB3 and ITGA5/ITGB1 integrins dimers at the surface of endothelial cells and competes with bFGF for heparin-binding sites, leading to an excess of soluble bFGF. The chain is Protein Tat from Human immunodeficiency virus type 1 group M subtype B (isolate PCV12) (HIV-1).